The primary structure comprises 414 residues: DNA primase large subunit PriL (414 aa).

Cysteine 251, cysteine 352, cysteine 370, and cysteine 376 together coordinate [4Fe-4S] cluster.

The protein belongs to the eukaryotic-type primase large subunit family. As to quaternary structure, heterodimer of a small subunit (PriS) and a large subunit (PriL). [4Fe-4S] cluster is required as a cofactor.

Functionally, regulatory subunit of DNA primase, an RNA polymerase that catalyzes the synthesis of short RNA molecules used as primers for DNA polymerase during DNA replication. Stabilizes and modulates the activity of the small subunit, increasing the rate of DNA synthesis, and conferring RNA synthesis capability. The DNA polymerase activity may enable DNA primase to also catalyze primer extension after primer synthesis. May also play a role in DNA repair. This chain is DNA primase large subunit PriL, found in Methanocaldococcus jannaschii (strain ATCC 43067 / DSM 2661 / JAL-1 / JCM 10045 / NBRC 100440) (Methanococcus jannaschii).